A 207-amino-acid chain; its full sequence is MDLNIKSLAGQEAGSLGVAEGVFAADYNEALIHQVVVAYMAGARQGTKAQKTRSEVSGGGAKPWRQKGTGRARAGTIRSPIFRKGGVTFAAKPKSYKQKVNRKMYSGAVKSILSELLRSGRMTIVEELKLETPKTREFKSVIDSLGVKDVLFVVGVEEFSENLYLSSRNLKNVAVCDSVEINPVSLVCFENVVLTKKAIKEIEEKLV.

Residues 48-70 (KAQKTRSEVSGGGAKPWRQKGTG) form a disordered region.

Belongs to the universal ribosomal protein uL4 family. As to quaternary structure, part of the 50S ribosomal subunit.

Its function is as follows. One of the primary rRNA binding proteins, this protein initially binds near the 5'-end of the 23S rRNA. It is important during the early stages of 50S assembly. It makes multiple contacts with different domains of the 23S rRNA in the assembled 50S subunit and ribosome. Functionally, forms part of the polypeptide exit tunnel. The chain is Large ribosomal subunit protein uL4 from Francisella tularensis subsp. holarctica (strain FTNF002-00 / FTA).